The chain runs to 469 residues: Trigger factor (469 aa).

The region spanning 162–243 (GDFVSIDLSA…VKSVKERELP (82 aa)) is the PPIase FKBP-type domain. Positions 438-469 (GPSGEQAAEDSAEESTDAAEGEAAEDADDTDK) are disordered. The segment covering 444–469 (AAEDSAEESTDAAEGEAAEDADDTDK) has biased composition (acidic residues).

Belongs to the FKBP-type PPIase family. Tig subfamily.

It localises to the cytoplasm. It catalyses the reaction [protein]-peptidylproline (omega=180) = [protein]-peptidylproline (omega=0). Involved in protein export. Acts as a chaperone by maintaining the newly synthesized protein in an open conformation. Functions as a peptidyl-prolyl cis-trans isomerase. The protein is Trigger factor of Mycolicibacterium smegmatis (strain ATCC 700084 / mc(2)155) (Mycobacterium smegmatis).